The primary structure comprises 274 residues: Exosome complex component Rrp42 (274 aa).

This sequence belongs to the RNase PH family. Rrp42 subfamily. As to quaternary structure, component of the archaeal exosome complex. Forms a hexameric ring-like arrangement composed of 3 Rrp41-Rrp42 heterodimers. The hexameric ring associates with a trimer of Rrp4 and/or Csl4 subunits.

It is found in the cytoplasm. In terms of biological role, non-catalytic component of the exosome, which is a complex involved in RNA degradation. Contributes to the structuring of the Rrp41 active site. This chain is Exosome complex component Rrp42, found in Pyrobaculum aerophilum (strain ATCC 51768 / DSM 7523 / JCM 9630 / CIP 104966 / NBRC 100827 / IM2).